The chain runs to 619 residues: Chaperone protein HscA homolog (619 aa).

It belongs to the heat shock protein 70 family.

Its function is as follows. Chaperone involved in the maturation of iron-sulfur cluster-containing proteins. Has a low intrinsic ATPase activity which is markedly stimulated by HscB. In Acinetobacter baumannii (strain ACICU), this protein is Chaperone protein HscA homolog.